The chain runs to 565 residues: Dihydroxy-acid dehydratase (565 aa).

Aspartate 80 contacts Mg(2+). Cysteine 121 provides a ligand contact to [2Fe-2S] cluster. Aspartate 122 and lysine 123 together coordinate Mg(2+). N6-carboxylysine is present on lysine 123. Residue cysteine 194 coordinates [2Fe-2S] cluster. Glutamate 447 provides a ligand contact to Mg(2+). Serine 473 (proton acceptor) is an active-site residue.

This sequence belongs to the IlvD/Edd family. As to quaternary structure, homodimer. [2Fe-2S] cluster serves as cofactor. Requires Mg(2+) as cofactor.

The enzyme catalyses (2R)-2,3-dihydroxy-3-methylbutanoate = 3-methyl-2-oxobutanoate + H2O. It carries out the reaction (2R,3R)-2,3-dihydroxy-3-methylpentanoate = (S)-3-methyl-2-oxopentanoate + H2O. Its pathway is amino-acid biosynthesis; L-isoleucine biosynthesis; L-isoleucine from 2-oxobutanoate: step 3/4. It participates in amino-acid biosynthesis; L-valine biosynthesis; L-valine from pyruvate: step 3/4. Its function is as follows. Functions in the biosynthesis of branched-chain amino acids. Catalyzes the dehydration of (2R,3R)-2,3-dihydroxy-3-methylpentanoate (2,3-dihydroxy-3-methylvalerate) into 2-oxo-3-methylpentanoate (2-oxo-3-methylvalerate) and of (2R)-2,3-dihydroxy-3-methylbutanoate (2,3-dihydroxyisovalerate) into 2-oxo-3-methylbutanoate (2-oxoisovalerate), the penultimate precursor to L-isoleucine and L-valine, respectively. This chain is Dihydroxy-acid dehydratase, found in Chlorobium luteolum (strain DSM 273 / BCRC 81028 / 2530) (Pelodictyon luteolum).